Consider the following 607-residue polypeptide: Developmental gene 1062 protein (607 aa).

Disordered stretches follow at residues 62 to 84 (LQGQ…HNNQ), 334 to 451 (ICDD…SNFQ), and 568 to 602 (DNNT…NDLL). Low complexity predominate over residues 334–363 (ICDDSSNSSTPSLSSYSNGNNKYNNNNNDS). Residues 364–382 (SESDESDDDDNNDDDDNDS) are compositionally biased toward acidic residues. Composition is skewed to low complexity over residues 383–451 (IDFN…SNFQ) and 568–582 (DNNT…ISVN).

This Dictyostelium discoideum (Social amoeba) protein is Developmental gene 1062 protein (DG1062).